We begin with the raw amino-acid sequence, 602 residues long: MTTISQKFIRNFSIIAHIDHGKSTLADRFIQLCGGLSEREMKAQVLDSMDIERERGITIKAQSVTLNFKSQDGHFYQLNFIDTPGHVDFSYEVSRSLAACEGALLVVDAAQGVEAQTVATCYTAIEQGLVVLPVLNKIDLPQADPERAIQEIEDVIGIEAHDAIRVSAKEGRGVKELLEQLVVAIPPPVGDPEAPLQALIIDSWFDSYLGVVSLVRVKAGTLRKGDKIRVMSTGKDYYADQIGHFTPKRQPLEELSAGAVGFVVAGIKDIFGAPVGDTLTHAKQSAGSPLPGFKQVKPQVFAGLFPINSEEYEPFREALAKLRLNDAALFYEPESSEALGFGFRCGFLGMLHMEIVQERLEREYNLELITTAPTVSYEILAKQGEMLYVDNPSHLPEPGKIGEIREPIAVANILVPPTYLGAVITLCVEKRGVQKKLLYLSNQVSMTYEIPLSEVVLDFFDRLKSASRGYASLDYSFNHFQAADLVKLDILISGQKVDALATIVHRDLAYTRGRELTERLKDLIPRQMFEVAIQAAIGAKIIARTSVKALRKNVTAKCYGGDITRKRKLLEKQKAGKKRMKQVGKVAIPQEAFLAVLRVKNE.

A tr-type G domain is found at 7 to 189 (KFIRNFSIIA…QLVVAIPPPV (183 aa)). Residues 19-24 (DHGKST) and 136-139 (NKID) each bind GTP.

This sequence belongs to the TRAFAC class translation factor GTPase superfamily. Classic translation factor GTPase family. LepA subfamily.

The protein resides in the cell inner membrane. It catalyses the reaction GTP + H2O = GDP + phosphate + H(+). Its function is as follows. Required for accurate and efficient protein synthesis under certain stress conditions. May act as a fidelity factor of the translation reaction, by catalyzing a one-codon backward translocation of tRNAs on improperly translocated ribosomes. Back-translocation proceeds from a post-translocation (POST) complex to a pre-translocation (PRE) complex, thus giving elongation factor G a second chance to translocate the tRNAs correctly. Binds to ribosomes in a GTP-dependent manner. This Coxiella burnetii (strain RSA 493 / Nine Mile phase I) protein is Elongation factor 4.